Reading from the N-terminus, the 337-residue chain is tRNA N6-adenosine threonylcarbamoyltransferase (337 aa).

Fe cation is bound by residues His-111 and His-115. Residues 134–138 (LVSGG), Asp-167, Gly-180, and Asn-272 each bind substrate. Asp-300 contributes to the Fe cation binding site.

It belongs to the KAE1 / TsaD family. The cofactor is Fe(2+).

It localises to the cytoplasm. It catalyses the reaction L-threonylcarbamoyladenylate + adenosine(37) in tRNA = N(6)-L-threonylcarbamoyladenosine(37) in tRNA + AMP + H(+). In terms of biological role, required for the formation of a threonylcarbamoyl group on adenosine at position 37 (t(6)A37) in tRNAs that read codons beginning with adenine. Is involved in the transfer of the threonylcarbamoyl moiety of threonylcarbamoyl-AMP (TC-AMP) to the N6 group of A37, together with TsaE and TsaB. TsaD likely plays a direct catalytic role in this reaction. This Escherichia coli O139:H28 (strain E24377A / ETEC) protein is tRNA N6-adenosine threonylcarbamoyltransferase.